Consider the following 220-residue polypeptide: Uracil-DNA glycosylase (220 aa).

Catalysis depends on Asp60, which acts as the Proton acceptor.

The protein belongs to the uracil-DNA glycosylase (UDG) superfamily. UNG family.

It is found in the cytoplasm. The enzyme catalyses Hydrolyzes single-stranded DNA or mismatched double-stranded DNA and polynucleotides, releasing free uracil.. In terms of biological role, excises uracil residues from the DNA which can arise as a result of misincorporation of dUMP residues by DNA polymerase or due to deamination of cytosine. In Francisella tularensis subsp. holarctica (strain FTNF002-00 / FTA), this protein is Uracil-DNA glycosylase.